The primary structure comprises 229 residues: MSSFKKILGLSSKSHKKSKKMGLPPPYDESCPMETQPSAPLSNDFFGMEDMDLYDKDSLRYEKFRFMLKMTVRSNKPFRSYDDVTAAVSQWDNSYIGMVGKRPFYKIIAVIGSSHLQATPAVLADLNQPEYYATLTGRCFLPHRLGLIPPMFNVQETFRKPFNIGLYKGTLDFTFTVSDDESNEKVPHVWDYMNPKYQSQIQQEGLKFGLILSKKATGTWVLDQLSPFK.

The segment covering 1-12 has biased composition (low complexity); the sequence is MSSFKKILGLSS. A disordered region spans residues 1–35; the sequence is MSSFKKILGLSSKSHKKSKKMGLPPPYDESCPMET. The dynamin binding motif lies at 2-4; it reads SSF. A PPXY motif motif is present at residues 24–27; that stretch reads PPPY. The short motif at 37 to 40 is the PTAP/PSAP motif element; that stretch reads PSAP.

The protein belongs to the vesiculoviruses matrix protein family. As to quaternary structure, homomultimer. Interacts with viral nucleocapsid; this interaction contributes to the virion assembly. Interacts with the viral envelope glycoprotein; this interaction contributes to the virion assembly. Interacts with host RAE1-NUP98 complex. Interacts with host NEDD4 and TSG101. Interacts with host dynamin. Interacts with host NDUFAF4; the interaction inhibits viral propagation and is independent of interferon activation. Interacts with host GTF2H5; the interaction may inhibit host transcription. Phosphorylated by host.

It localises to the virion. It is found in the host endomembrane system. Its subcellular location is the host nucleus membrane. The protein resides in the host nucleus. The protein localises to the host cytoplasm. In terms of biological role, forms a double layer around the helical nucleocapsid, the inner matrix layer binding to the N helix and the outer matrix layer binding to the envelope glycoprotein. Plays a major role in assembly and budding of virion, by recruiting cellular partners of the ESCRT complexes that play a key role in releasing the budding particle from the host membrane. Condensates the ribonucleocapsid core during virus assembly. Inhibits the host mRNA nuclear export thereby inducing the shut off of cellular transcription and preventing the interferon signaling and the establishment of antiviral state in infected cells. This shutoff presumably inhibits interferon signaling and thus establishment of antiviral state in virus infected cells. Induces cell-rounding, cytoskeleton disorganization and apoptosis in infected cell. Inhibits host transcription, possibly through interaction with host DNA repair factor IIH/TFIIH GTF2H5 subunit. This chain is Matrix protein (M), found in Aedes (Bovine).